The primary structure comprises 65 residues: Large ribosomal subunit protein bL35 (65 aa).

The disordered stretch occupies residues 1 to 51; sequence MPKIKTNRGAAKRFRKSASGRVKRGNAFTSHILTHKTRKNKRNLRGTSMVS. Basic residues-rich tracts occupy residues 10-24 and 33-44; these read AAKR…RVKR and LTHKTRKNKRNL.

The protein belongs to the bacterial ribosomal protein bL35 family.

The protein is Large ribosomal subunit protein bL35 of Pelobacter propionicus (strain DSM 2379 / NBRC 103807 / OttBd1).